The sequence spans 218 residues: Small ribosomal subunit protein uS3c (218 aa).

Positions 39–118 (IRNFIKNYVQ…KLNIAITRIA (80 aa)) constitute a KH type-2 domain.

This sequence belongs to the universal ribosomal protein uS3 family. Part of the 30S ribosomal subunit.

The protein localises to the plastid. Its subcellular location is the chloroplast. The protein is Small ribosomal subunit protein uS3c (rps3) of Ipomoea purpurea (Common morning glory).